Consider the following 126-residue polypeptide: Putative 15 kDa capsid protein (126 aa).

The protein resides in the virion. This chain is Putative 15 kDa capsid protein (P15), found in Bombyx mori nuclear polyhedrosis virus (BmNPV).